Here is a 660-residue protein sequence, read N- to C-terminus: Bifunctional polymyxin resistance protein ArnA (660 aa).

The formyltransferase ArnAFT stretch occupies residues M1–L304. The active-site Proton donor; for formyltransferase activity is H104. (6R)-10-formyltetrahydrofolate is bound by residues R114 and V136–D140. Positions R314–S660 are dehydrogenase ArnADH. NAD(+)-binding positions include D347 and D368–I369. UDP-alpha-D-glucuronate-binding positions include A393, Y398, and T432 to S433. The active-site Proton acceptor; for decarboxylase activity is E434. UDP-alpha-D-glucuronate-binding positions include R460, N492, K526–R535, and Y613. The active-site Proton donor; for decarboxylase activity is R619.

In the N-terminal section; belongs to the Fmt family. UDP-L-Ara4N formyltransferase subfamily. It in the C-terminal section; belongs to the NAD(P)-dependent epimerase/dehydratase family. UDP-glucuronic acid decarboxylase subfamily. In terms of assembly, homohexamer, formed by a dimer of trimers.

It catalyses the reaction UDP-alpha-D-glucuronate + NAD(+) = UDP-beta-L-threo-pentopyranos-4-ulose + CO2 + NADH. It carries out the reaction UDP-4-amino-4-deoxy-beta-L-arabinose + (6R)-10-formyltetrahydrofolate = UDP-4-deoxy-4-formamido-beta-L-arabinose + (6S)-5,6,7,8-tetrahydrofolate + H(+). It participates in nucleotide-sugar biosynthesis; UDP-4-deoxy-4-formamido-beta-L-arabinose biosynthesis; UDP-4-deoxy-4-formamido-beta-L-arabinose from UDP-alpha-D-glucuronate: step 1/3. The protein operates within nucleotide-sugar biosynthesis; UDP-4-deoxy-4-formamido-beta-L-arabinose biosynthesis; UDP-4-deoxy-4-formamido-beta-L-arabinose from UDP-alpha-D-glucuronate: step 3/3. It functions in the pathway bacterial outer membrane biogenesis; lipopolysaccharide biosynthesis. Bifunctional enzyme that catalyzes the oxidative decarboxylation of UDP-glucuronic acid (UDP-GlcUA) to UDP-4-keto-arabinose (UDP-Ara4O) and the addition of a formyl group to UDP-4-amino-4-deoxy-L-arabinose (UDP-L-Ara4N) to form UDP-L-4-formamido-arabinose (UDP-L-Ara4FN). The modified arabinose is attached to lipid A and is required for resistance to polymyxin and cationic antimicrobial peptides. This Salmonella newport (strain SL254) protein is Bifunctional polymyxin resistance protein ArnA.